A 284-amino-acid polypeptide reads, in one-letter code: Elongation factor Ts (284 aa).

Residues 80 to 83 (TDFV) form an involved in Mg(2+) ion dislocation from EF-Tu region.

The protein belongs to the EF-Ts family.

The protein localises to the cytoplasm. Associates with the EF-Tu.GDP complex and induces the exchange of GDP to GTP. It remains bound to the aminoacyl-tRNA.EF-Tu.GTP complex up to the GTP hydrolysis stage on the ribosome. This Neisseria gonorrhoeae (strain ATCC 700825 / FA 1090) protein is Elongation factor Ts.